The sequence spans 152 residues: Glutaredoxin-related protein 5, mitochondrial (152 aa).

The transit peptide at 1–31 directs the protein to the mitochondrion; that stretch reads MSASLSRAAAALLRWGRSAGGGGLPGAGVRA. Positions 38–141 constitute a Glutaredoxin domain; sequence AEQLDALVKK…EELKKLGIRS (104 aa). Residue K55 coordinates glutathione. K55 is subject to N6-succinyllysine. C63 is a binding site for [2Fe-2S] cluster. Glutathione-binding positions include 93-97, I105, and 118-119; these read RQGIK and CD. A Phosphoserine modification is found at S151.

It belongs to the glutaredoxin family. Monothiol subfamily. Homodimer. Interacts with ISCU. Interacts with BOLA1. As to expression, detected in bone, liver, muscle and kidney.

The protein localises to the mitochondrion matrix. Monothiol glutaredoxin involved in mitochondrial iron-sulfur (Fe/S) cluster transfer. Receives 2Fe/2S clusters from scaffold protein ISCU and mediates their transfer to apoproteins, to the 4Fe/FS cluster biosynthesis machinery, or export from mitochondrion. Required for normal regulation of hemoglobin synthesis by the iron-sulfur protein ACO1. The polypeptide is Glutaredoxin-related protein 5, mitochondrial (Glrx5) (Mus musculus (Mouse)).